A 163-amino-acid chain; its full sequence is Phosphopantetheine adenylyltransferase (163 aa).

Residue T10 coordinates substrate. ATP is bound by residues 10 to 11 (TF) and H18. Residues K42, L74, and R88 each coordinate substrate. ATP is bound by residues 89-91 (GLR), E99, and 124-130 (NSFISST).

Belongs to the bacterial CoaD family. Homohexamer. It depends on Mg(2+) as a cofactor.

The protein localises to the cytoplasm. The catalysed reaction is (R)-4'-phosphopantetheine + ATP + H(+) = 3'-dephospho-CoA + diphosphate. The protein operates within cofactor biosynthesis; coenzyme A biosynthesis; CoA from (R)-pantothenate: step 4/5. Functionally, reversibly transfers an adenylyl group from ATP to 4'-phosphopantetheine, yielding dephospho-CoA (dPCoA) and pyrophosphate. The chain is Phosphopantetheine adenylyltransferase from Shewanella baltica (strain OS195).